The following is a 284-amino-acid chain: Pantothenate synthetase (284 aa).

30–37 (MGNLHDGH) is a binding site for ATP. His37 acts as the Proton donor in catalysis. Gln61 contributes to the (R)-pantoate binding site. Gln61 provides a ligand contact to beta-alanine. 149–152 (GEKD) serves as a coordination point for ATP. A (R)-pantoate-binding site is contributed by Gln155. ATP contacts are provided by residues Val178 and 186 to 189 (LSSR).

It belongs to the pantothenate synthetase family. In terms of assembly, homodimer.

The protein localises to the cytoplasm. The enzyme catalyses (R)-pantoate + beta-alanine + ATP = (R)-pantothenate + AMP + diphosphate + H(+). It participates in cofactor biosynthesis; (R)-pantothenate biosynthesis; (R)-pantothenate from (R)-pantoate and beta-alanine: step 1/1. Functionally, catalyzes the condensation of pantoate with beta-alanine in an ATP-dependent reaction via a pantoyl-adenylate intermediate. The polypeptide is Pantothenate synthetase (Klebsiella pneumoniae subsp. pneumoniae (strain ATCC 700721 / MGH 78578)).